The chain runs to 360 residues: DNA primase large subunit PriL (360 aa).

The [4Fe-4S] cluster site is built by cysteine 237, cysteine 309, cysteine 318, and cysteine 325. Positions 340 to 360 (DDGDDDDLADWRDREDDDSPD) are disordered.

This sequence belongs to the eukaryotic-type primase large subunit family. As to quaternary structure, heterodimer of a small subunit (PriS) and a large subunit (PriL). The cofactor is [4Fe-4S] cluster.

Its function is as follows. Regulatory subunit of DNA primase, an RNA polymerase that catalyzes the synthesis of short RNA molecules used as primers for DNA polymerase during DNA replication. Stabilizes and modulates the activity of the small subunit, increasing the rate of DNA synthesis, and conferring RNA synthesis capability. The DNA polymerase activity may enable DNA primase to also catalyze primer extension after primer synthesis. May also play a role in DNA repair. This Halobacterium salinarum (strain ATCC 29341 / DSM 671 / R1) protein is DNA primase large subunit PriL.